The chain runs to 467 residues: 3-isopropylmalate dehydratase large subunit (467 aa).

Positions 347, 407, and 410 each coordinate [4Fe-4S] cluster.

The protein belongs to the aconitase/IPM isomerase family. LeuC type 1 subfamily. As to quaternary structure, heterodimer of LeuC and LeuD. Requires [4Fe-4S] cluster as cofactor.

The enzyme catalyses (2R,3S)-3-isopropylmalate = (2S)-2-isopropylmalate. Its pathway is amino-acid biosynthesis; L-leucine biosynthesis; L-leucine from 3-methyl-2-oxobutanoate: step 2/4. Functionally, catalyzes the isomerization between 2-isopropylmalate and 3-isopropylmalate, via the formation of 2-isopropylmaleate. The sequence is that of 3-isopropylmalate dehydratase large subunit from Gloeothece citriformis (strain PCC 7424) (Cyanothece sp. (strain PCC 7424)).